The following is a 591-amino-acid chain: Aspartate--tRNA ligase (591 aa).

Residue Glu-173 coordinates L-aspartate. The segment at 197–200 is aspartate; it reads QLFK. Residue Arg-219 coordinates L-aspartate. ATP contacts are provided by residues 219-221 and Gln-228; that span reads RDE. Residue His-448 coordinates L-aspartate. Position 482 (Glu-482) interacts with ATP. Arg-489 lines the L-aspartate pocket. 534-537 serves as a coordination point for ATP; sequence GLDR.

The protein belongs to the class-II aminoacyl-tRNA synthetase family. Type 1 subfamily. As to quaternary structure, homodimer.

The protein resides in the cytoplasm. The enzyme catalyses tRNA(Asp) + L-aspartate + ATP = L-aspartyl-tRNA(Asp) + AMP + diphosphate. In terms of biological role, catalyzes the attachment of L-aspartate to tRNA(Asp) in a two-step reaction: L-aspartate is first activated by ATP to form Asp-AMP and then transferred to the acceptor end of tRNA(Asp). The polypeptide is Aspartate--tRNA ligase (Shewanella amazonensis (strain ATCC BAA-1098 / SB2B)).